A 202-amino-acid polypeptide reads, in one-letter code: Small ribosomal subunit protein uS4c (202 aa).

The segment covering 1–13 (MSRYRGPRMKMIR) has biased composition (basic residues). Residues 1–41 (MSRYRGPRMKMIRRPGTLPGLTSKTPGTKVGSSDRSTSSKK) form a disordered region. Residues 29-41 (KVGSSDRSTSSKK) are compositionally biased toward low complexity. Residues 90 to 153 (MRLDNTIFRL…KCRLVDRRDM (64 aa)) form the S4 RNA-binding domain.

Belongs to the universal ribosomal protein uS4 family. In terms of assembly, part of the 30S ribosomal subunit. Contacts protein S5. The interaction surface between S4 and S5 is involved in control of translational fidelity.

The protein localises to the plastid. Functionally, one of the primary rRNA binding proteins, it binds directly to 16S rRNA where it nucleates assembly of the body of the 30S subunit. In terms of biological role, with S5 and S12 plays an important role in translational accuracy. This Aneura mirabilis (Parasitic liverwort) protein is Small ribosomal subunit protein uS4c (rps4).